The sequence spans 158 residues: Inorganic pyrophosphatase (158 aa).

Residue Glu-8 participates in Mg(2+) binding. Positions 16, 30, and 42 each coordinate substrate. 4 residues coordinate Mg(2+): Asp-52, Asp-57, Asp-84, and Asp-89. The active-site Proton acceptor is Asp-89. Substrate is bound at residue Tyr-125.

It belongs to the PPase family. As to quaternary structure, homohexamer. The cofactor is Mg(2+).

It localises to the cytoplasm. It carries out the reaction diphosphate + H2O = 2 phosphate + H(+). Functionally, catalyzes the hydrolysis of inorganic pyrophosphate (PPi) forming two phosphate ions. This chain is Inorganic pyrophosphatase, found in Corynebacterium glutamicum (strain ATCC 13032 / DSM 20300 / JCM 1318 / BCRC 11384 / CCUG 27702 / LMG 3730 / NBRC 12168 / NCIMB 10025 / NRRL B-2784 / 534).